Here is a 204-residue protein sequence, read N- to C-terminus: Ribosome maturation factor RimP (204 aa).

Positions 176 to 204 (GNFDESQFDEIEESEGEEADEAEQPPTKH) are disordered. Positions 181–198 (SQFDEIEESEGEEADEAE) are enriched in acidic residues.

This sequence belongs to the RimP family.

The protein localises to the cytoplasm. Functionally, required for maturation of 30S ribosomal subunits. This Cereibacter sphaeroides (strain KD131 / KCTC 12085) (Rhodobacter sphaeroides) protein is Ribosome maturation factor RimP.